The following is a 365-amino-acid chain: UDP-N-acetylglucosamine--N-acetylmuramyl-(pentapeptide) pyrophosphoryl-undecaprenol N-acetylglucosamine transferase (365 aa).

UDP-N-acetyl-alpha-D-glucosamine-binding positions include 19–21 (TGG), N131, R170, S201, I255, 274–279 (ALTVTE), and Q300.

It belongs to the glycosyltransferase 28 family. MurG subfamily.

The protein localises to the cell inner membrane. The catalysed reaction is di-trans,octa-cis-undecaprenyl diphospho-N-acetyl-alpha-D-muramoyl-L-alanyl-D-glutamyl-meso-2,6-diaminopimeloyl-D-alanyl-D-alanine + UDP-N-acetyl-alpha-D-glucosamine = di-trans,octa-cis-undecaprenyl diphospho-[N-acetyl-alpha-D-glucosaminyl-(1-&gt;4)]-N-acetyl-alpha-D-muramoyl-L-alanyl-D-glutamyl-meso-2,6-diaminopimeloyl-D-alanyl-D-alanine + UDP + H(+). It participates in cell wall biogenesis; peptidoglycan biosynthesis. Functionally, cell wall formation. Catalyzes the transfer of a GlcNAc subunit on undecaprenyl-pyrophosphoryl-MurNAc-pentapeptide (lipid intermediate I) to form undecaprenyl-pyrophosphoryl-MurNAc-(pentapeptide)GlcNAc (lipid intermediate II). The polypeptide is UDP-N-acetylglucosamine--N-acetylmuramyl-(pentapeptide) pyrophosphoryl-undecaprenol N-acetylglucosamine transferase (Acinetobacter baylyi (strain ATCC 33305 / BD413 / ADP1)).